Reading from the N-terminus, the 94-residue chain is Integration host factor subunit beta (94 aa).

It belongs to the bacterial histone-like protein family. In terms of assembly, heterodimer of an alpha and a beta chain.

This protein is one of the two subunits of integration host factor, a specific DNA-binding protein that functions in genetic recombination as well as in transcriptional and translational control. This Actinobacillus succinogenes (strain ATCC 55618 / DSM 22257 / CCUG 43843 / 130Z) protein is Integration host factor subunit beta.